The primary structure comprises 441 residues: Na(+)/H(+) antiporter NhaA 2 (441 aa).

12 helical membrane passes run 34-54, 77-97, 115-135, 146-166, 176-196, 199-219, 225-245, 249-269, 290-310, 317-337, 355-375, and 389-409; these read VGGA…NSPW, LTLG…VVGL, ALPM…FVAV, GWAI…AVIS, FLLT…AVFY, EINL…ALCV, SWWL…ESGV, VAGV…AGGP, VAVP…VSGL, PITL…IFLT, WIDV…SLLI, and FVKV…AVLL.

Belongs to the NhaA Na(+)/H(+) (TC 2.A.33) antiporter family.

It is found in the cell membrane. It catalyses the reaction Na(+)(in) + 2 H(+)(out) = Na(+)(out) + 2 H(+)(in). Na(+)/H(+) antiporter that extrudes sodium in exchange for external protons. This chain is Na(+)/H(+) antiporter NhaA 2, found in Mycobacterium sp. (strain MCS).